We begin with the raw amino-acid sequence, 126 residues long: Protein ApaG (126 aa).

One can recognise an ApaG domain in the interval 2-126 (SDPRYQIDVS…FRLAVPGALH (125 aa)).

The chain is Protein ApaG from Pseudomonas fluorescens (strain SBW25).